A 136-amino-acid polypeptide reads, in one-letter code: Large ribosomal subunit protein bL21 (136 aa).

Over residues 1–21 (MSETPSKAKASKPAESKAQAS) the composition is skewed to low complexity. The tract at residues 1–25 (MSETPSKAKASKPAESKAQASDSSG) is disordered.

The protein belongs to the bacterial ribosomal protein bL21 family. In terms of assembly, part of the 50S ribosomal subunit. Contacts protein L20.

In terms of biological role, this protein binds to 23S rRNA in the presence of protein L20. This chain is Large ribosomal subunit protein bL21, found in Synechococcus sp. (strain RCC307).